The primary structure comprises 176 residues: Translation initiation factor IF-3 (176 aa).

The protein belongs to the IF-3 family. As to quaternary structure, monomer.

It localises to the cytoplasm. Its function is as follows. IF-3 binds to the 30S ribosomal subunit and shifts the equilibrium between 70S ribosomes and their 50S and 30S subunits in favor of the free subunits, thus enhancing the availability of 30S subunits on which protein synthesis initiation begins. The chain is Translation initiation factor IF-3 from Microcystis aeruginosa (strain NIES-843 / IAM M-2473).